The sequence spans 67 residues: Potassium channel toxin alpha-KTx (67 aa).

The first 25 residues, 1–25 (MKNIAMKTTVVLTILLLSVLTAINA), serve as a signal peptide directing secretion. Residues 26 to 31 (DTMKKR) constitute a propeptide that is removed on maturation. 4 cysteine pairs are disulfide-bonded: Cys-35–Cys-54, Cys-40–Cys-59, Cys-44–Cys-61, and Cys-49–Cys-64.

The protein belongs to the short scorpion toxin superfamily. Potassium channel inhibitor family. Expressed by the venom gland.

Its subcellular location is the secreted. Functionally, blocks Kv1.1/KCNA1, Kv1.2/KCNA2 and Kv1.3/KCNA3 voltage-gated potassium channels. In Hoffmannihadrurus gertschi (Scorpion), this protein is Potassium channel toxin alpha-KTx.